Consider the following 257-residue polypeptide: Thiazole synthase (257 aa).

The active-site Schiff-base intermediate with DXP is Lys-96. 1-deoxy-D-xylulose 5-phosphate-binding positions include Gly-157, 184–185 (AG), and 206–207 (NT).

It belongs to the ThiG family. Homotetramer. Forms heterodimers with either ThiH or ThiS.

It is found in the cytoplasm. It carries out the reaction [ThiS sulfur-carrier protein]-C-terminal-Gly-aminoethanethioate + 2-iminoacetate + 1-deoxy-D-xylulose 5-phosphate = [ThiS sulfur-carrier protein]-C-terminal Gly-Gly + 2-[(2R,5Z)-2-carboxy-4-methylthiazol-5(2H)-ylidene]ethyl phosphate + 2 H2O + H(+). The protein operates within cofactor biosynthesis; thiamine diphosphate biosynthesis. Its function is as follows. Catalyzes the rearrangement of 1-deoxy-D-xylulose 5-phosphate (DXP) to produce the thiazole phosphate moiety of thiamine. Sulfur is provided by the thiocarboxylate moiety of the carrier protein ThiS. In vitro, sulfur can be provided by H(2)S. The protein is Thiazole synthase of Rhizobium meliloti (strain 1021) (Ensifer meliloti).